Consider the following 371-residue polypeptide: Chaperone protein DnaJ (371 aa).

Residues 5-70 enclose the J domain; sequence CYYEILNISK…SKRSRYDQFG (66 aa). Residues 127-204 form a CR-type zinc finger; it reads GVEKEITIPR…CYGNGKVKKQ (78 aa). 8 residues coordinate Zn(2+): C140, C143, C156, C159, C178, C181, C192, and C195. 4 CXXCXGXG motif repeats span residues 140–147, 156–163, 178–185, and 192–199; these read CDSCDGTG, CHACHGQG, CPVCNGTG, and CDACYGNG.

This sequence belongs to the DnaJ family. In terms of assembly, homodimer. The cofactor is Zn(2+).

Its subcellular location is the cytoplasm. Participates actively in the response to hyperosmotic and heat shock by preventing the aggregation of stress-denatured proteins and by disaggregating proteins, also in an autonomous, DnaK-independent fashion. Unfolded proteins bind initially to DnaJ; upon interaction with the DnaJ-bound protein, DnaK hydrolyzes its bound ATP, resulting in the formation of a stable complex. GrpE releases ADP from DnaK; ATP binding to DnaK triggers the release of the substrate protein, thus completing the reaction cycle. Several rounds of ATP-dependent interactions between DnaJ, DnaK and GrpE are required for fully efficient folding. Also involved, together with DnaK and GrpE, in the DNA replication of plasmids through activation of initiation proteins. The chain is Chaperone protein DnaJ from Francisella tularensis subsp. holarctica (strain LVS).